A 430-amino-acid chain; its full sequence is Alpha-humulene synthase asR6 (430 aa).

It belongs to the terpene synthase family. Alpha-humulene synthase eupE subfamily. Mg(2+) is required as a cofactor.

It catalyses the reaction (2E,6E)-farnesyl diphosphate = alpha-humulene + diphosphate. It functions in the pathway secondary metabolite biosynthesis; terpenoid biosynthesis. Alpha-humulene synthase; part of the gene cluster that mediates the biosynthesis of xenovulene A, an unusual meroterpenoid that has potent inhibitory effects on the human gamma-aminobutyrate A (GABAA) benzodiazepine receptor. The first step of xenovulene A biosynthesis is the biosynthesis of 3-methylorcinaldehyde performed by the non-reducing polyketide synthase aspks1. The salicylate hydroxylase asL1 then catalyzes the oxidative dearomatization of 3-methylorcinaldehyde to yield a dearomatized hydroxycyclohexadione. The 2-oxoglutarate-dependent dioxygenase asL3 further catalyzes the oxidative ring expansion to provide the first tropolone metabolite. The cytochrome P450 monooxygenase asR2 allows the synthesis of tropolone hemiacetal. In parallel, a previously unrecognised class of terpene cyclase, asR6, produces alpha-humulene from farnesylpyrophosphate (FPP). The putative Diels-Alderase asR5 probably catalyzes the formation of the tropolone-humulene skeleton by linking humulene and the polyketide moiety. Oxidative-ring contractions catalyzed by asL4 and asL6 then processively remove carbon atoms from the polyketide to yield xenovulene A. This is Alpha-humulene synthase asR6 from Sarocladium schorii (Acremonium strictum (strain IMI 501407)).